A 548-amino-acid chain; its full sequence is 5-epi-aristolochene synthase (548 aa).

Arg264, Asp301, Asp305, Arg441, and Asp444 together coordinate (2E,6E)-farnesyl diphosphate. Mg(2+) contacts are provided by Asp301 and Asp305. The short motif at 301–305 (DDTFD) is the DDXXD motif element. 4 residues coordinate Mg(2+): Asp444, Asp445, Thr448, and Glu452.

This sequence belongs to the terpene synthase family. In terms of assembly, monomer. The cofactor is Mg(2+). Self-alkylated at Tyr-520 in the presence of (2Z,6E)-farnesyl diphosphate ((Z,E)-FPP). Self-alkylated at Asp-444 at warm temperature (42 degrees Celsius) in the presence of (2E,6E)-farnesyl diphosphate ((E,E)-FPP).

It localises to the cytoplasm. The enzyme catalyses (2E,6E)-farnesyl diphosphate = (+)-5-epi-aristolochene + diphosphate. It catalyses the reaction (2Z,6E)-farnesyl diphosphate = (+)-2-epi-prezizaene + diphosphate. It carries out the reaction (2Z,6E)-farnesyl diphosphate = (-)-alpha-cedrene + diphosphate. The catalysed reaction is (2Z,6E)-farnesyl diphosphate = (-)-beta-curcumene + diphosphate. It participates in secondary metabolite biosynthesis; terpenoid biosynthesis. Its activity is regulated as follows. Inhibited activity toward farnesyl diphosphate (FPP) by anilinogeranyl diphosphate (AGPP); AGPP undergoes a cyclization event leading to the formation of a novel macrocyclic paracyclophane alkaloid. Repressed by sesquilavandulyl diphosphate (SPP) via the induction of self-alkyation. Its function is as follows. Catalyzes the cyclization of trans,trans-farnesyl diphosphate (FPP) to the bicyclic intermediate 5-epi-aristolochene, initial step in the conversion of FPP to the sesquiterpenoid antifungal phytoalexin capsidiol. Produces germacrene A as an enzyme-bound intermediate that is not released by the enzyme, but is further cyclized to produce the bicyclic 5-epi-aristolochene. Mediates, at low levels, the formation of 4-epi-eremophilene and premnaspirodiene from trans,trans-farnesyl diphosphate. Also mediates the conversion of cis,trans-farnesyl diphosphate to cisoid minor products such as (+)-2-epi-prezizaene, (-)-alpha-cedrene and, to a lesser extent, (-)-beta-curcumene; also produces, at low levels, alpha-acoradiene and 4-epi-alpha-acoradiene, but barely nerolidol, alpha-bisabolol, epi-alpha-bisabolol and cis-farnesol. The protein is 5-epi-aristolochene synthase (EAS3) of Nicotiana tabacum (Common tobacco).